The chain runs to 928 residues: Serine/threonine-protein kinase atg1 (928 aa).

The Protein kinase domain maps to 6 to 315 (YTRLDEIGRG…FPEFFENEVI (310 aa)). ATP-binding positions include 12 to 20 (IGRGSFATV) and Lys35. The active-site Proton acceptor is Asp149. 2 disordered regions span residues 318 to 470 (PIPG…EQER) and 544 to 571 (FSGRSRADSTHHRQASYERRYGQSPTSA). Positions 359-371 (TRREREVNREDVY) are enriched in basic and acidic residues. The segment covering 437–452 (TTTAIERQRSRNTYSE) has biased composition (polar residues). Composition is skewed to basic and acidic residues over residues 459–470 (QPADKLKEEQER) and 548–564 (SRADSTHHRQASYERRY).

This sequence belongs to the protein kinase superfamily. Ser/Thr protein kinase family. APG1/unc-51/ULK1 subfamily. Homodimer. Forms a ternary complex with ATG13 and ATG17.

Its subcellular location is the cytoplasm. The protein resides in the preautophagosomal structure membrane. It carries out the reaction L-seryl-[protein] + ATP = O-phospho-L-seryl-[protein] + ADP + H(+). The enzyme catalyses L-threonyl-[protein] + ATP = O-phospho-L-threonyl-[protein] + ADP + H(+). In terms of biological role, serine/threonine protein kinase involved in the cytoplasm to vacuole transport (Cvt) and found to be essential in autophagy, where it is required for the formation of autophagosomes. Involved in the clearance of protein aggregates which cannot be efficiently cleared by the proteasome. Required for selective autophagic degradation of the nucleus (nucleophagy) as well as for mitophagy which contributes to regulate mitochondrial quantity and quality by eliminating the mitochondria to a basal level to fulfill cellular energy requirements and preventing excess ROS production. Also involved in endoplasmic reticulum-specific autophagic process, in selective removal of ER-associated degradation (ERAD) substrates. Plays a key role in ATG9 and ATG23 cycling through the pre-autophagosomal structure and is necessary to promote ATG18 binding to ATG9 through phosphorylation of ATG9. Catalyzes phosphorylation of ATG4, decreasing the interaction between ATG4 and ATG8 and impairing deconjugation of PE-conjugated forms of ATG8. This is Serine/threonine-protein kinase atg1 from Aspergillus clavatus (strain ATCC 1007 / CBS 513.65 / DSM 816 / NCTC 3887 / NRRL 1 / QM 1276 / 107).